A 319-amino-acid chain; its full sequence is Solute carrier family 25 member 34 (319 aa).

The tract at residues 1–22 (MNSAFSGPSSPTPGPSPPRPPL) is disordered. Pro residues predominate over residues 10 to 22 (SPTPGPSPPRPPL). 3 Solcar repeats span residues 22–115 (LWPP…MQAA), 119–212 (DGPC…AKDW), and 222–313 (LSSL…LRQR). Transmembrane regions (helical) follow at residues 25-45 (PLDF…TNPL), 63-83 (SYRR…RTDG), 116-138 (GVTD…GAFI), 188-209 (VNGA…FSSA), 224-244 (SLNT…IMTP), and 296-319 (LAPH…PYTH).

This sequence belongs to the mitochondrial carrier (TC 2.A.29) family.

The protein localises to the mitochondrion inner membrane. This Danio rerio (Zebrafish) protein is Solute carrier family 25 member 34 (slc25a34).